The chain runs to 325 residues: Beta-ketoacyl-[acyl-carrier-protein] synthase III (325 aa).

Active-site residues include C112 and H250. Residues 251 to 255 are ACP-binding; it reads QANSR. The active site involves N280.

The protein belongs to the thiolase-like superfamily. FabH family. As to quaternary structure, homodimer.

The protein resides in the cytoplasm. It carries out the reaction malonyl-[ACP] + acetyl-CoA + H(+) = 3-oxobutanoyl-[ACP] + CO2 + CoA. It functions in the pathway lipid metabolism; fatty acid biosynthesis. In terms of biological role, catalyzes the condensation reaction of fatty acid synthesis by the addition to an acyl acceptor of two carbons from malonyl-ACP. Catalyzes the first condensation reaction which initiates fatty acid synthesis and may therefore play a role in governing the total rate of fatty acid production. Possesses both acetoacetyl-ACP synthase and acetyl transacylase activities. Its substrate specificity determines the biosynthesis of branched-chain and/or straight-chain of fatty acids. The protein is Beta-ketoacyl-[acyl-carrier-protein] synthase III of Lactococcus lactis subsp. cremoris (strain MG1363).